A 495-amino-acid polypeptide reads, in one-letter code: REST corepressor 3 (495 aa).

Positions 1–83 (MRVGAEYQAR…KSLADLPNFT (83 aa)) constitute an ELM2 domain. K20 participates in a covalent cross-link: Glycyl lysine isopeptide (Lys-Gly) (interchain with G-Cter in SUMO2). An SANT 1 domain is found at 84–135 (PFPDEWTVEDKVLFEQAFSFHGKSFHRIQQMLPDKTIASLVKYYYSWKKTRS). Residues 147–219 (LANRHNQGDS…SQRSKCRPPK (73 aa)) are disordered. Phosphoserine is present on residues S156 and S171. Over residues 162 to 184 (ETHPMDGNDSDYDPKKEAKKEGN) the composition is skewed to basic and acidic residues. A Glycyl lysine isopeptide (Lys-Gly) (interchain with G-Cter in SUMO2) cross-link involves residue K193. The segment covering 205–217 (QHRHHSQRSKCRP) has biased composition (basic residues). The stretch at 237-273 (AANTILRQLDMELISLKRQVQNAKQVNSALKQKMEGG) forms a coiled coil. Residue K285 forms a Glycyl lysine isopeptide (Lys-Gly) (interchain with G-Cter in SUMO2) linkage. An SANT 2 domain is found at 285–336 (KINARWTTEEQLLAVQGVRKYGKDFQAIADVIGNKTVGQVKNFFVNYRRRFN). Positions 346–495 (AEQGTQASNG…IQTDSQSSLH (150 aa)) are disordered. Residues 348-357 (QGTQASNGDA) are compositionally biased toward polar residues. T376 carries the phosphothreonine modification. Over residues 393-405 (PSPPAPSSTPTPT) the composition is skewed to pro residues. The span at 419–428 (RPTLPAAPAL) shows a compositional bias: low complexity. An asymmetric dimethylarginine mark is found at R445 and R457. Positions 475-495 (VGGQQPPSLIGIQTDSQSSLH) are enriched in polar residues.

Belongs to the CoREST family.

The protein localises to the nucleus. Functionally, may act as a component of a corepressor complex that represses transcription. The chain is REST corepressor 3 (RCOR3) from Homo sapiens (Human).